A 676-amino-acid polypeptide reads, in one-letter code: Cysteine-rich receptor-like protein kinase 8 (676 aa).

Positions 1-34 (MYIVSMFGLAGLEALICFIFLFLFSFLTSFKASA) are cleaved as a signal peptide. At 35–291 (QNPFYLNHDC…IPGKSGNSTV (257 aa)) the chain is on the extracellular side. Gnk2-homologous domains are found at residues 38–142 (FYLN…HKNF) and 151–255 (ELIM…LYAF). 8 N-linked (GlcNAc...) asparagine glycosylation sites follow: N46, N53, N71, N114, N159, N187, N257, and N288. A helical membrane pass occupies residues 292-312 (LVVAIVVLAVLLFIALVGYCF). The Cytoplasmic segment spans residues 313–676 (LAQRTKKTFD…DELITDLYPR (364 aa)). A Protein kinase domain is found at 353 to 639 (FAESNKIGRG…TLPVPRQPGF (287 aa)). Residues 359–367 (IGRGGFGEV) and K381 each bind ATP. Y426 bears the Phosphotyrosine mark. D478 (proton acceptor) is an active-site residue. At S482 the chain carries Phosphoserine. Position 518 is a phosphothreonine (T518). At Y526 the chain carries Phosphotyrosine. The tract at residues 640–666 (FIQSSPVKDPTDSDQSTTTKSTPASID) is disordered. Over residues 652-662 (SDQSTTTKSTP) the composition is skewed to low complexity.

It belongs to the protein kinase superfamily. Ser/Thr protein kinase family. CRK subfamily.

It localises to the membrane. The catalysed reaction is L-seryl-[protein] + ATP = O-phospho-L-seryl-[protein] + ADP + H(+). It carries out the reaction L-threonyl-[protein] + ATP = O-phospho-L-threonyl-[protein] + ADP + H(+). The sequence is that of Cysteine-rich receptor-like protein kinase 8 (CRK8) from Arabidopsis thaliana (Mouse-ear cress).